Consider the following 112-residue polypeptide: Diuretic hormone class 2 (112 aa).

The N-terminal stretch at 1–24 is a signal peptide; it reads MVRATCLLASCVLFALLLIVPASA. The propeptide occupies 25–71; it reads YPRYPSNYFREEGQYEPEEIMDMLNRLGNLIQMERKMENYKEDITSE. A Proline amide modification is found at Pro104. A propeptide spanning residues 108–112 is cleaved from the precursor; sequence RRDAH.

As to expression, expressed in corpora cardiaca (CC), corpora allata (CA), antennal lobe (AL) and gnathal ganglion (GNG) (at protein level). Expression in CC, CA and AL detected in most animals, expression in GNG in few animals (at protein level).

The protein resides in the secreted. Functionally, regulation of fluid secretion. Stimulates Malpighian tubule fluid secretion. This is Diuretic hormone class 2 from Agrotis ipsilon (Black cutworm moth).